The following is a 56-amino-acid chain: Genome polyprotein (56 aa).

The tract at residues 1-30 (ETMLDRIASGDLESSVDDPRSAEDKRFESH) is disordered. Residues 17 to 30 (DDPRSAEDKRFESH) are compositionally biased toward basic and acidic residues.

It belongs to the picornaviridae polyprotein family. In terms of assembly, homopentamer. Homooligomer. Interacts with capsid protein VP2. Interacts with capsid protein VP3. In terms of processing, specific enzymatic cleavages by viral protease in vivo yield a variety of precursors and mature proteins. Polyprotein processing intermediates are produced, such as P1-2A which is a functional precursor of the structural proteins, VP0 which is a VP4-VP2 precursor, VP1-2A precursor, 3ABC precursor which is a stable and catalytically active precursor of 3A, 3B and 3C proteins, 3AB and 3CD precursors. The assembly signal 2A is removed from VP1-2A by a host protease, possibly host Cathepsin L. This cleavage occurs over a region of 3 amino-acids probably generating VP1 proteins with heterogeneous C-termini. Post-translationally, the assembly signal 2A is removed from VP1-2A by a host protease, possibly host Cathepsin L in naked virions. This cleavage does not occur in enveloped virions. This cleavage occurs over a region of 3 amino-acids probably generating VP1 proteins with heterogeneous C-termini.

The protein resides in the virion. It localises to the host endosome. The protein localises to the host multivesicular body. Functionally, capsid proteins VP1, VP2, and VP3 form a closed capsid enclosing the viral positive strand RNA genome. All these proteins contain a beta-sheet structure called beta-barrel jelly roll. Together they form an icosahedral capsid (T=3) composed of 60 copies of each VP1, VP2, and VP3, with a diameter of approximately 300 Angstroms. VP1 is situated at the 12 fivefold axes, whereas VP2 and VP3 are located at the quasi-sixfold axes. The naked capsid interacts with the host receptor HAVCR1 to provide virion attachment to and probably entry into the target cell. Its function is as follows. Precursor component of immature procapsids that corresponds to an extended form of the structural protein VP1. After maturation, possibly by the host Cathepsin L, the assembly signal 2A is cleaved to give rise to the mature VP1 protein. The chain is Genome polyprotein from Callithrix (Owl-faced monkey).